The primary structure comprises 489 residues: MEKLYDKSLTELHDLLVSKEITAVDLTEETLNRIQDTEEQLGSFITVSEEKAMALAKAIDLKGITESNPLAGIPIGIKDNIVTKDILTTAGSKMLHNFDPIYDATVMDKVYQADMIPVGKLNMDEFAMGGSTETSYFKKTKNAWDQTKVPGGSSGGSASAVAAGQVPVSLGSDTGGSIRQPAAFNGIVGLKPTYGRVSRFGLIAFASSLDQIGPLTRNVKDNALALNAISGYDEKDGTSAGVSVPDFTADLTGDIKGMKIALPKEYLGEGVQPDVREAVLKAAETFKALGATVEEVSLPHSKYGIAAYYIIASSEASSNLQRFDGIRYGYRSENVQNLEDVYVNSRSEGFGTEVKRRIMLGTFSLSAGYYDAHFKKAGQVRTLIKQDFENVFADYDLIIGPSTPTVAFGLGENINDPITMYMYDILTVPVNLAGLPGMSIPAGFSEGLPVGLQIIGKHFDEHTMYKAAYAFEQATDFHTKKPVILGGND.

Active-site charge relay system residues include Lys-78 and Ser-153. The active-site Acyl-ester intermediate is Ser-177.

The protein belongs to the amidase family. GatA subfamily. Heterotrimer of A, B and C subunits.

It carries out the reaction L-glutamyl-tRNA(Gln) + L-glutamine + ATP + H2O = L-glutaminyl-tRNA(Gln) + L-glutamate + ADP + phosphate + H(+). Allows the formation of correctly charged Gln-tRNA(Gln) through the transamidation of misacylated Glu-tRNA(Gln) in organisms which lack glutaminyl-tRNA synthetase. The reaction takes place in the presence of glutamine and ATP through an activated gamma-phospho-Glu-tRNA(Gln). This Enterococcus faecalis (strain ATCC 700802 / V583) protein is Glutamyl-tRNA(Gln) amidotransferase subunit A.